Here is a 309-residue protein sequence, read N- to C-terminus: Porphobilinogen deaminase (309 aa).

Cys241 is modified (S-(dipyrrolylmethanemethyl)cysteine).

This sequence belongs to the HMBS family. Monomer. It depends on dipyrromethane as a cofactor.

It catalyses the reaction 4 porphobilinogen + H2O = hydroxymethylbilane + 4 NH4(+). Its pathway is porphyrin-containing compound metabolism; protoporphyrin-IX biosynthesis; coproporphyrinogen-III from 5-aminolevulinate: step 2/4. In terms of biological role, tetrapolymerization of the monopyrrole PBG into the hydroxymethylbilane pre-uroporphyrinogen in several discrete steps. The sequence is that of Porphobilinogen deaminase from Bacillus cereus (strain G9842).